The chain runs to 555 residues: Glutamate--tRNA ligase (555 aa).

A 'HIGH' region motif is present at residues 100–110 (PNPSGPLHIGH).

It belongs to the class-I aminoacyl-tRNA synthetase family. Glutamate--tRNA ligase type 2 subfamily.

It localises to the cytoplasm. The enzyme catalyses tRNA(Glu) + L-glutamate + ATP = L-glutamyl-tRNA(Glu) + AMP + diphosphate. In terms of biological role, catalyzes the attachment of glutamate to tRNA(Glu) in a two-step reaction: glutamate is first activated by ATP to form Glu-AMP and then transferred to the acceptor end of tRNA(Glu). The sequence is that of Glutamate--tRNA ligase from Methanococcus maripaludis (strain C5 / ATCC BAA-1333).